A 181-amino-acid chain; its full sequence is Peptidyl-tRNA hydrolase 2, mitochondrial (181 aa).

The chain crosses the membrane as a helical span at residues 10 to 32 (YLVHPGTLSLAAGVACGMCLGWG). Residues lysine 78, lysine 83, lysine 97, lysine 108, lysine 117, and lysine 179 each participate in a glycyl lysine isopeptide (Lys-Gly) (interchain with G-Cter in ubiquitin) cross-link.

It belongs to the PTH2 family. In terms of assembly, monomer. Ubiquitinated by PRKN during mitophagy, leading to its degradation and enhancement of mitophagy. Deubiquitinated by USP30.

Its subcellular location is the mitochondrion outer membrane. The enzyme catalyses an N-acyl-L-alpha-aminoacyl-tRNA + H2O = an N-acyl-L-amino acid + a tRNA + H(+). Peptidyl-tRNA hydrolase which releases tRNAs from the ribosome during protein synthesis. Promotes caspase-independent apoptosis by regulating the function of two transcriptional regulators, AES and TLE1. This chain is Peptidyl-tRNA hydrolase 2, mitochondrial (Ptrh2), found in Mus musculus (Mouse).